A 317-amino-acid polypeptide reads, in one-letter code: Ribosomal RNA small subunit methyltransferase H (317 aa).

Residues 34–36 (GGH), Asp53, Phe80, Asp98, and Gln105 contribute to the S-adenosyl-L-methionine site.

This sequence belongs to the methyltransferase superfamily. RsmH family.

The protein resides in the cytoplasm. The enzyme catalyses cytidine(1402) in 16S rRNA + S-adenosyl-L-methionine = N(4)-methylcytidine(1402) in 16S rRNA + S-adenosyl-L-homocysteine + H(+). In terms of biological role, specifically methylates the N4 position of cytidine in position 1402 (C1402) of 16S rRNA. This is Ribosomal RNA small subunit methyltransferase H from Tropheryma whipplei (strain TW08/27) (Whipple's bacillus).